A 160-amino-acid polypeptide reads, in one-letter code: Allophycocyanin alpha chain (160 aa).

Position 70 is an N4-methylasparagine (Asn70). Cys80 provides a ligand contact to (2R,3E)-phycocyanobilin.

It belongs to the phycobiliprotein family. As to quaternary structure, component of the phycobilisome. Heterodimer of an alpha and a beta chain. Contains one covalently linked phycocyanobilin chromophore.

It is found in the cellular thylakoid membrane. Light-harvesting photosynthetic bile pigment-protein from the phycobiliprotein complex. Allophycocyanin has a maximum absorption at approximately 650 nanometers. The protein is Allophycocyanin alpha chain (apcA) of Anabaena cylindrica.